Reading from the N-terminus, the 217-residue chain is Probable transaldolase (217 aa).

Lysine 83 acts as the Schiff-base intermediate with substrate in catalysis.

Belongs to the transaldolase family. Type 3B subfamily.

The protein resides in the cytoplasm. The catalysed reaction is D-sedoheptulose 7-phosphate + D-glyceraldehyde 3-phosphate = D-erythrose 4-phosphate + beta-D-fructose 6-phosphate. It participates in carbohydrate degradation; pentose phosphate pathway; D-glyceraldehyde 3-phosphate and beta-D-fructose 6-phosphate from D-ribose 5-phosphate and D-xylulose 5-phosphate (non-oxidative stage): step 2/3. Functionally, transaldolase is important for the balance of metabolites in the pentose-phosphate pathway. The sequence is that of Probable transaldolase from Maricaulis maris (strain MCS10) (Caulobacter maris).